The following is a 479-amino-acid chain: Sulfate adenylyltransferase subunit 1 (479 aa).

The tr-type G domain occupies 22–238 (KDMLRFLTCG…DSMDISKEPK (217 aa)). The segment at 31–38 (GSVDDGKS) is G1. 31 to 38 (GSVDDGKS) serves as a coordination point for GTP. The segment at 89–93 (GITID) is G2. The segment at 110–113 (DTPG) is G3. GTP-binding positions include 110 to 114 (DTPGH) and 165 to 168 (NKMD). A G4 region spans residues 165–168 (NKMD). The tract at residues 202–204 (SAL) is G5.

Belongs to the TRAFAC class translation factor GTPase superfamily. Classic translation factor GTPase family. CysN/NodQ subfamily. As to quaternary structure, heterodimer composed of CysD, the smaller subunit, and CysN.

The catalysed reaction is sulfate + ATP + H(+) = adenosine 5'-phosphosulfate + diphosphate. It functions in the pathway sulfur metabolism; hydrogen sulfide biosynthesis; sulfite from sulfate: step 1/3. With CysD forms the ATP sulfurylase (ATPS) that catalyzes the adenylation of sulfate producing adenosine 5'-phosphosulfate (APS) and diphosphate, the first enzymatic step in sulfur assimilation pathway. APS synthesis involves the formation of a high-energy phosphoric-sulfuric acid anhydride bond driven by GTP hydrolysis by CysN coupled to ATP hydrolysis by CysD. In Sulfurovum sp. (strain NBC37-1), this protein is Sulfate adenylyltransferase subunit 1.